We begin with the raw amino-acid sequence, 1058 residues long: Receptor-type guanylate cyclase gcy-22 (1058 aa).

An N-terminal signal peptide occupies residues 1–23 (MSFISKCFICLLFSTYFLPPVNS). At 25 to 470 (VLQVGFLAAN…PKSFTDQYLA (446 aa)) the chain is on the extracellular side. Asn-36, Asn-73, Asn-201, Asn-215, Asn-277, Asn-302, Asn-324, Asn-350, and Asn-386 each carry an N-linked (GlcNAc...) asparagine glycan. A helical transmembrane segment spans residues 471 to 491 (IILGCTAAALVLIIAVISTIV). Over 492-1058 (FLVRSKRQEE…IEAKENGESI (567 aa)) the chain is Cytoplasmic. Positions 501–809 (EERLNQLWQV…SSNLMDHVFN (309 aa)) constitute a Protein kinase domain. Residues 811 to 840 (LEQYASNLEDEVQARMKELTEEKKRSDVLL) are a coiled coil. In terms of domain architecture, Guanylate cyclase spans 867–997 (TIFFSDVVSF…DSVNTASRME (131 aa)).

Belongs to the adenylyl cyclase class-4/guanylyl cyclase family. As to expression, expression in ASER neuron begins at an early larval stage and is maintained in the adult.

The protein localises to the cell membrane. The enzyme catalyses GTP = 3',5'-cyclic GMP + diphosphate. Its function is as follows. Guanylate cyclase involved in the production of the second messenger cGMP. Regulates chemotaxis responses toward Li(1-), Mg(2+), Cl(1-), Br(1)- and I(1-) salt ions and methionine in ASE right (ASER) sensory neuron. May regulate ASER neuronal activity such as axon sprouting and calcium responses to changes in salt concentrations. The sequence is that of Receptor-type guanylate cyclase gcy-22 from Caenorhabditis elegans.